The sequence spans 304 residues: MNWITNYVRPKINSMLGRREVPENLWIKCPETGEMVFHRDLEENKWVIPQSGFHMKMPAKARLKDLFDGGIYEAFPQPKVAQDPLKFRDSKKYSDRLRDSRTKTELEDTIVAGLGQVQGIKLVAVAHEFNFIGGSLGIAAGEAIVKAFERAIAEKCPLVMFPASGGARMQEGILSLMQLPRTTVAVNMLKEAGLPYIVVLTNPTTGGVTASYAMLGDVHLAEPGAEIGFAGKRVIEQTLREKLPEGFQTSEYLMEHGMVDMVVKRHDIPETLARVLNILMKKPAKAIKRDTATELAPLPVAASA.

The CoA carboxyltransferase N-terminal domain maps to 25-294 (LWIKCPETGE…KAIKRDTATE (270 aa)).

Belongs to the AccD/PCCB family. As to quaternary structure, acetyl-CoA carboxylase is a heterohexamer composed of biotin carboxyl carrier protein (AccB), biotin carboxylase (AccC) and two subunits each of ACCase subunit alpha (AccA) and ACCase subunit beta (AccD).

The protein localises to the cytoplasm. The catalysed reaction is N(6)-carboxybiotinyl-L-lysyl-[protein] + acetyl-CoA = N(6)-biotinyl-L-lysyl-[protein] + malonyl-CoA. It functions in the pathway lipid metabolism; malonyl-CoA biosynthesis; malonyl-CoA from acetyl-CoA: step 1/1. In terms of biological role, component of the acetyl coenzyme A carboxylase (ACC) complex. Biotin carboxylase (BC) catalyzes the carboxylation of biotin on its carrier protein (BCCP) and then the CO(2) group is transferred by the transcarboxylase to acetyl-CoA to form malonyl-CoA. In Sinorhizobium medicae (strain WSM419) (Ensifer medicae), this protein is Acetyl-coenzyme A carboxylase carboxyl transferase subunit beta.